A 287-amino-acid chain; its full sequence is Nucleotide-binding protein VP2673 (287 aa).

ATP is bound at residue 8-15 (GHSGAGKS). 56–59 (DIRN) is a GTP binding site.

The protein belongs to the RapZ-like family.

Its function is as follows. Displays ATPase and GTPase activities. In Vibrio parahaemolyticus serotype O3:K6 (strain RIMD 2210633), this protein is Nucleotide-binding protein VP2673.